Reading from the N-terminus, the 260-residue chain is Small ribosomal subunit protein cS22 (260 aa).

A chloroplast-targeting transit peptide spans 1–62; that stretch reads MATISSILPC…TNPPLLKVRA (62 aa). The segment covering 63–78 has biased composition (low complexity); that stretch reads VVTEETSSSSTASSSS. The segment at 63 to 83 is disordered; the sequence is VVTEETSSSSTASSSSDGEGA. 2 consecutive RRM domains span residues 84–162 and 184–260; these read RRLY…ITEK and YKVY…VNKA.

As to quaternary structure, component of the chloroplast small ribosomal subunit (SSU). Mature 70S chloroplast ribosomes of higher plants consist of a small (30S) and a large (50S) subunit. The 30S small subunit contains 1 molecule of ribosomal RNA (16S rRNA) and 24 different proteins. The 50S large subunit contains 3 rRNA molecules (23S, 5S and 4.5S rRNA) and 33 different proteins.

The protein localises to the plastid. It is found in the chloroplast. Component of the chloroplast ribosome (chloro-ribosome), a dedicated translation machinery responsible for the synthesis of chloroplast genome-encoded proteins, including proteins of the transcription and translation machinery and components of the photosynthetic apparatus. cS22 may have a role in the recruitment of stored chloroplast mRNAs for active protein synthesis. This chain is Small ribosomal subunit protein cS22 (PSRP2), found in Spinacia oleracea (Spinach).